A 199-amino-acid polypeptide reads, in one-letter code: N-(5'-phosphoribosyl)anthranilate isomerase (199 aa).

Belongs to the TrpF family.

It carries out the reaction N-(5-phospho-beta-D-ribosyl)anthranilate = 1-(2-carboxyphenylamino)-1-deoxy-D-ribulose 5-phosphate. The protein operates within amino-acid biosynthesis; L-tryptophan biosynthesis; L-tryptophan from chorismate: step 3/5. This is N-(5'-phosphoribosyl)anthranilate isomerase from Streptococcus pneumoniae (strain Taiwan19F-14).